Consider the following 272-residue polypeptide: 3-methyl-2-oxobutanoate hydroxymethyltransferase (272 aa).

D54 and D93 together coordinate Mg(2+). 3-methyl-2-oxobutanoate contacts are provided by residues 54 to 55 (DS), D93, and K123. Position 125 (E125) interacts with Mg(2+). E190 functions as the Proton acceptor in the catalytic mechanism.

Belongs to the PanB family. In terms of assembly, homodecamer; pentamer of dimers. Mg(2+) is required as a cofactor.

The protein localises to the cytoplasm. The enzyme catalyses 3-methyl-2-oxobutanoate + (6R)-5,10-methylene-5,6,7,8-tetrahydrofolate + H2O = 2-dehydropantoate + (6S)-5,6,7,8-tetrahydrofolate. It functions in the pathway cofactor biosynthesis; (R)-pantothenate biosynthesis; (R)-pantoate from 3-methyl-2-oxobutanoate: step 1/2. Its function is as follows. Catalyzes the reversible reaction in which hydroxymethyl group from 5,10-methylenetetrahydrofolate is transferred onto alpha-ketoisovalerate to form ketopantoate. This chain is 3-methyl-2-oxobutanoate hydroxymethyltransferase, found in Tropheryma whipplei (strain Twist) (Whipple's bacillus).